Reading from the N-terminus, the 297-residue chain is Acetylglutamate kinase (297 aa).

Substrate contacts are provided by residues 68–69 (GG), arginine 90, and asparagine 189.

The protein belongs to the acetylglutamate kinase family. ArgB subfamily.

It is found in the cytoplasm. It catalyses the reaction N-acetyl-L-glutamate + ATP = N-acetyl-L-glutamyl 5-phosphate + ADP. Its pathway is amino-acid biosynthesis; L-arginine biosynthesis; N(2)-acetyl-L-ornithine from L-glutamate: step 2/4. Its function is as follows. Catalyzes the ATP-dependent phosphorylation of N-acetyl-L-glutamate. The polypeptide is Acetylglutamate kinase (Akkermansia muciniphila (strain ATCC BAA-835 / DSM 22959 / JCM 33894 / BCRC 81048 / CCUG 64013 / CIP 107961 / Muc)).